Reading from the N-terminus, the 220-residue chain is UPF0319 protein YccT (220 aa).

An N-terminal signal peptide occupies residues 1–20 (MKAGTLTLLIALCLPISVSA).

The protein belongs to the UPF0319 family.

This chain is UPF0319 protein YccT, found in Escherichia fergusonii (strain ATCC 35469 / DSM 13698 / CCUG 18766 / IAM 14443 / JCM 21226 / LMG 7866 / NBRC 102419 / NCTC 12128 / CDC 0568-73).